The primary structure comprises 395 residues: Type II restriction enzyme BsuFI (395 aa).

In terms of assembly, homodimer. Requires Mg(2+) as cofactor.

The enzyme catalyses Endonucleolytic cleavage of DNA to give specific double-stranded fragments with terminal 5'-phosphates.. Its function is as follows. A P subtype restriction enzyme that recognizes the double-stranded sequence 5'-CCGG-3' and cleaves after C-1. The chain is Type II restriction enzyme BsuFI (hsdFR) from Bacillus subtilis.